Reading from the N-terminus, the 156-residue chain is Deoxyuridine 5'-triphosphate nucleotidohydrolase (156 aa).

Residues 76–78 (RSG), asparagine 89, 93–95 (TVD), and lysine 103 contribute to the substrate site.

The protein belongs to the dUTPase family. Mg(2+) serves as cofactor.

It catalyses the reaction dUTP + H2O = dUMP + diphosphate + H(+). It participates in pyrimidine metabolism; dUMP biosynthesis; dUMP from dCTP (dUTP route): step 2/2. This enzyme is involved in nucleotide metabolism: it produces dUMP, the immediate precursor of thymidine nucleotides and it decreases the intracellular concentration of dUTP so that uracil cannot be incorporated into DNA. In Rhizobium rhizogenes (strain K84 / ATCC BAA-868) (Agrobacterium radiobacter), this protein is Deoxyuridine 5'-triphosphate nucleotidohydrolase.